The following is a 396-amino-acid chain: Lysophospholipid transporter LplT (396 aa).

Topologically, residues 1–17 are periplasmic; the sequence is MSESVHTNTSLWSKGMK. The chain crosses the membrane as a helical span at residues 18–38; sequence AVIVAQFLSAFGDNALLFATL. Residues 39–52 are Cytoplasmic-facing; sequence ALLKAQFYPEWSQP. Residues 53 to 73 form a helical membrane-spanning segment; it reads ILQMVFVGAYILLAPFVGQVA. Residues 74–90 lie on the Periplasmic side of the membrane; that stretch reads DSFAKGRVMMFANGLKL. Residues 91–111 form a helical membrane-spanning segment; it reads LGAASICFGINPFLGYTLVGV. The Cytoplasmic portion of the chain corresponds to 112-144; sequence GAAAYSPAKYGILGELTTGSKLVKANGLMEASA. A helical transmembrane segment spans residues 145–165; the sequence is IAAILLGSVAGGVLADWHVLV. Residue A166 is a topological domain, periplasmic. The helical transmembrane segment at 167–187 threads the bilayer; that stretch reads LAACALAYGGAVVANIYIPKL. Over 188–225 the chain is Cytoplasmic; sequence AARPGQSWNLINMTRSFLNACTSLWCNGETRFSLVGAS. Residues 226–246 traverse the membrane as a helical segment; sequence LFWGAGVTLRFLLVLWVPVAL. The Periplasmic segment spans residues 247-255; sequence GITDNATPT. A helical transmembrane segment spans residues 256–276; it reads YLNAMVAIGIVVGAGAAAKLV. Over 277–279 the chain is Cytoplasmic; sequence TLE. The chain crosses the membrane as a helical span at residues 280–300; sequence TVSRCMPAGILIGVVVLIFSL. Residues 301–303 lie on the Periplasmic side of the membrane; it reads QHE. The helical transmembrane segment at 304 to 324 threads the bilayer; sequence LLPAYALLMLIGVLGGFFVVP. Over 325–342 the chain is Cytoplasmic; sequence LNALLQERGKKSVGAGNA. Residues 343 to 363 form a helical membrane-spanning segment; the sequence is IAVQNLGENSAMLLMLGIYSL. The Periplasmic portion of the chain corresponds to 364–365; the sequence is AV. A helical transmembrane segment spans residues 366 to 386; sequence MVGIPVVPIGIGFGALFALAI. The Cytoplasmic segment spans residues 387–396; sequence TALWIWQRRH.

Belongs to the major facilitator superfamily. LplT (TC 2.A.1.42) family.

It localises to the cell inner membrane. Its function is as follows. Catalyzes the facilitated diffusion of 2-acyl-glycero-3-phosphoethanolamine (2-acyl-GPE) into the cell. The protein is Lysophospholipid transporter LplT of Shigella flexneri serotype 5b (strain 8401).